The following is a 213-amino-acid chain: Protein-L-isoaspartate O-methyltransferase (213 aa).

Residue Ser58 is part of the active site.

It belongs to the methyltransferase superfamily. L-isoaspartyl/D-aspartyl protein methyltransferase family.

It localises to the cytoplasm. It catalyses the reaction [protein]-L-isoaspartate + S-adenosyl-L-methionine = [protein]-L-isoaspartate alpha-methyl ester + S-adenosyl-L-homocysteine. Its function is as follows. Catalyzes the methyl esterification of L-isoaspartyl residues in peptides and proteins that result from spontaneous decomposition of normal L-aspartyl and L-asparaginyl residues. It plays a role in the repair and/or degradation of damaged proteins. The sequence is that of Protein-L-isoaspartate O-methyltransferase from Chlorobaculum tepidum (strain ATCC 49652 / DSM 12025 / NBRC 103806 / TLS) (Chlorobium tepidum).